The following is a 655-amino-acid chain: Hepatocyte growth factor activator serine protease (655 aa).

Residues 1 to 35 (MGRWAWVPSPWPPPGLGPFLLLLLLLLLLPRGFQP) form the signal peptide. Positions 36-372 (QPGGNRTESP…RLEACESLTR (337 aa)) are cleaved as a propeptide — removed in mature form. Residues N40 and N48 are each glycosylated (N-linked (GlcNAc...) asparagine). A disordered region spans residues 64–102 (TSETPATSAPEAEGPQSGGLPPPPRAVPSSSSPQAQALT). A Fibronectin type-II domain is found at 103-150 (EDGRPCRFPFRYGGRMLHACTSEGSAHRKWCATTHNYDRDRAWGYCVE). Intrachain disulfides connect C108–C133, C122–C148, C164–C175, C169–C186, C188–C197, C202–C230, C228–C237, C245–C256, C250–C267, C269–C278, C286–C367, C307–C349, C338–C362, C394–C521, C432–C448, C440–C510, C535–C604, C567–C583, and C594–C622. Positions 160 to 198 (ALDPCASGPCLNGGSCSNTQDPQSYHCSCPRAFTGKDCG) constitute an EGF-like 1 domain. One can recognise a Fibronectin type-I domain in the interval 200–240 (EKCFDETRYEYLEGGDRWARVRQGHVEQCECFGGRTWCEGT). An EGF-like 2 domain is found at 241–279 (RHTACLSSPCLNGGTCHLIVATGTTVCACPPGFAGRLCN). The Kringle domain occupies 286–367 (CFLGNGTGYR…SWEYCRLEAC (82 aa)). N-linked (GlcNAc...) asparagine glycosylation occurs at N290. Residues 408–646 (IIGGSSSLPG…YVDWINDRIR (239 aa)) form the Peptidase S1 domain. H447 acts as the Charge relay system in catalysis. N-linked (GlcNAc...) asparagine glycans are attached at residues N468 and N492. D497 serves as the catalytic Charge relay system. Residue N546 is glycosylated (N-linked (GlcNAc...) asparagine). Residue S598 is the Charge relay system of the active site.

Belongs to the peptidase S1 family. In terms of assembly, heterodimer of a short chain and a long chain linked by a disulfide bond. The active form of HGFAC presents in the serum is derived from the COOH-terminal region of the precursor by the cleavage of bonds between Arg-372 and Val-373 and Arg-407 and Ile-408. As to expression, liver.

It is found in the secreted. Serine protease that hydrolyzes the inactive zymogen hepatocyte growth factor (HGFsc) to an activated disulfide-linked heterodimer, then initiating hepatocyte growth factor receptor signaling pathway. The polypeptide is Hepatocyte growth factor activator serine protease (Homo sapiens (Human)).